Reading from the N-terminus, the 270-residue chain is Checkpoint signal transducer rad24 (270 aa).

Phosphoserine occurs at positions 34 and 66. The tract at residues 242–270 (AAAGGNTEGAQENAPSNAPEGEAEPKADA) is disordered.

The protein belongs to the 14-3-3 family. As to quaternary structure, homodimer. Binds preferentially to mei2 phosphorylated by ran1/pat1. Binds preferentially to cdc25 phosphorylated by srk1 during G2; the interaction is increased during osmotic stress. Interacts with byr2. Interacts with rad25.

The protein localises to the cytoplasm. In terms of biological role, acts in cell cycle and stress checkpoint signaling by sequestering signal transducers regulated by the checkpoints. Required for the DNA damage checkpoint that ensures that DNA damage is repaired before mitosis is attempted. During environmental stress, sequesters srk1-phosphorylated cdc25 in the cytoplasm to delay the G2/M transition. Sequesters byr2 in the cytoplasm to prevent its translocation to the plasma membrane. Sequesters ran1/pat1-phosphorylated mei2 from its non-coding RNA activators (including meiRNA), to prevent meiotic induction in vegetative cells and to regulate meiosis I. The sequence is that of Checkpoint signal transducer rad24 from Schizosaccharomyces pombe (strain 972 / ATCC 24843) (Fission yeast).